The sequence spans 94 residues: Integration host factor subunit beta (94 aa).

The protein belongs to the bacterial histone-like protein family. In terms of assembly, heterodimer of an alpha and a beta chain.

Functionally, this protein is one of the two subunits of integration host factor, a specific DNA-binding protein that functions in genetic recombination as well as in transcriptional and translational control. This is Integration host factor subunit beta from Photorhabdus laumondii subsp. laumondii (strain DSM 15139 / CIP 105565 / TT01) (Photorhabdus luminescens subsp. laumondii).